Here is a 157-residue protein sequence, read N- to C-terminus: Lipoprotein signal peptidase (157 aa).

Helical transmembrane passes span 10–30 (LVFMGVFFLIFGVDQAIKYAI), 58–78 (FLEGGLKYLQILLILGLFIFL), and 84–104 (LFKNHAIEFGMVFGAGVSNVL). Residues Asp-114 and Asp-131 contribute to the active site. Residues 122-142 (FDFAIFNFADVMIDVGVGVLL) traverse the membrane as a helical segment.

It belongs to the peptidase A8 family.

Its subcellular location is the cell inner membrane. It carries out the reaction Release of signal peptides from bacterial membrane prolipoproteins. Hydrolyzes -Xaa-Yaa-Zaa-|-(S,diacylglyceryl)Cys-, in which Xaa is hydrophobic (preferably Leu), and Yaa (Ala or Ser) and Zaa (Gly or Ala) have small, neutral side chains.. It functions in the pathway protein modification; lipoprotein biosynthesis (signal peptide cleavage). This protein specifically catalyzes the removal of signal peptides from prolipoproteins. This chain is Lipoprotein signal peptidase, found in Helicobacter pylori (strain ATCC 700392 / 26695) (Campylobacter pylori).